Reading from the N-terminus, the 650-residue chain is MLLSKLSILLAKWLSVAVYAGTLVHDEQFIPDHILRVSVAQVPSACENREDVVVNGTSPGPAIHLLPGARTWIRVYNDMNDRNLSMHWHGLSQRFAPFSDGTPSATQWPIPPGHFFDYEILTEPEDAGTYFYHSHVGMQALSCTGPLIVEDCGSSPYHYDDERILLFQDHFQKSDLEMIQGLTSTQFTWTGETRGILLNGRGVSPNQAAVQGRPGEASGFFGSHRFSNFRAGDGTSNSWDGIRGDDQIEPPTDCTLPVIDVEPGKTYRLRFIGATGLSLLTMGFEDHNDLTIVQVDGSEYNAPVTVDHIQLGGGQRFDVLLRTKTAEELRCNGDKTTYFLQFETRDRPDPYRGYGVLRYNLGTPVPAAPTTPALTLPAEVNNWLEYTFQPLHPSSSLSPTAEEVTRRVILEAEQKIDPATGRLVWKLAHMTWTDMSRDKPVLVDIYERGEAAMPDYAAALTNYGWDPATKLFPAKKDEVLEIVIQNTGSHYSGASGIVETHPFHAHGQHFYDVGSGPGKYDPEANNAKLASLGYRPIKRDTTMVYRYGEGKVAPGEPAGWRAWRMKMNNPGVWMVHCHILAHMIMGMETIWVVGDAEDIVTIPLSVSQNYFTYGGSVYGNDTHAPEVYHYFDDTNKCCAAGAGDSEDSGH.

The N-terminal stretch at 1 to 20 (MLLSKLSILLAKWLSVAVYA) is a signal peptide. 3 Plastocyanin-like domains span residues 41–151 (QVPS…IVED), 162–360 (ERIL…LRYN), and 439–595 (KPVL…VVGD). The cysteines at positions 46 and 254 are disulfide-linked. N-linked (GlcNAc...) asparagine glycosylation is found at N55 and N83. Residues H87, H89, H133, and H135 each contribute to the Cu cation site. Residues H501, H504, H506, H576, C577, H578, and H582 each coordinate Cu cation. N620 carries N-linked (GlcNAc...) asparagine glycosylation.

Belongs to the multicopper oxidase family. As to quaternary structure, monomer. In terms of processing, N-glycosylation Asn-55 and Asn-83 is involved in folding, conformational stability and laccase activity.

It catalyses the reaction 2 2',3,4-trihydroxy-trans-chalcone + O2 + 2 H(+) = 2 3',4'-dihydroxyaurone + 2 H2O. Its activity is regulated as follows. Retains almost half of its activity in presence of high salt concentrations up to 100 mM NaCl. Retains also more than 85% of its original activity in the presence of 1 mM EDTA, indicating a satisfactory resistance towards chelators, which is rare among metal-containing enzyme. The activity drops significantly in the presence of NaN(3) or SDS. Appears more active in the presence of methanol compared to ethanol, but acetone or DMSO addition severely affect remaining laccase activity. Its function is as follows. Yellow laccase-like multicopper oxidase that is able to oxidize a variety of phenolic compounds including standard laccase substrates such as 2'-azino-bis(3-ethylbenzothiazoline-6-sulphonic acid) (ABTS) and 2,6-dimethoxyphenol (2,6-DMP). The existence of an ortho-hydroxy group is crucial for oxidation since pyrogallol and catechol, which contain ortho-hydroxy groups, are readily oxidized, which is not the case for resorcinol and hydroquinone, that contain meta- and para-hydroxy groups, respectively. The same is also true for the existence of a methoxy group in an ortho-position, since 2,6-DMP, guaiacol and ferulic and caffeic acids are also rather easily oxidized compared with the corresponding unsubstituted compound. Can be used for the bioconversion of 2',3,4-trihy-droxychalcone to 3',4'-dihydroxy-aurone, a bioactive aurone recently shown to possess inhibitory activity against several isoforms of the histone deacetylase complex (HDAC). The sequence is that of Laccase-like multicopper oxidase 1 from Thermothelomyces thermophilus (strain ATCC 42464 / BCRC 31852 / DSM 1799) (Sporotrichum thermophile).